The following is a 547-amino-acid chain: Chaperonin GroEL 2 (547 aa).

ATP-binding positions include 30–33, Lys51, 87–91, Gly415, and Asp496; these read TLGP and DGTTT.

The protein belongs to the chaperonin (HSP60) family. In terms of assembly, forms a cylinder of 14 subunits composed of two heptameric rings stacked back-to-back. Interacts with the co-chaperonin GroES.

The protein resides in the cytoplasm. It catalyses the reaction ATP + H2O + a folded polypeptide = ADP + phosphate + an unfolded polypeptide.. Together with its co-chaperonin GroES, plays an essential role in assisting protein folding. The GroEL-GroES system forms a nano-cage that allows encapsulation of the non-native substrate proteins and provides a physical environment optimized to promote and accelerate protein folding. The polypeptide is Chaperonin GroEL 2 (Rhodopseudomonas palustris (strain ATCC BAA-98 / CGA009)).